The following is a 465-amino-acid chain: Cysteine--tRNA ligase (465 aa).

C28 lines the Zn(2+) pocket. The 'HIGH' region motif lies at 30-40; sequence PTVYNYIHVGN. Zn(2+) is bound by residues C208, H233, and E237. A 'KMSKS' region motif is present at residues 265–269; sequence KMSKS. K268 contributes to the ATP binding site.

Belongs to the class-I aminoacyl-tRNA synthetase family. Monomer. Zn(2+) serves as cofactor.

It is found in the cytoplasm. It carries out the reaction tRNA(Cys) + L-cysteine + ATP = L-cysteinyl-tRNA(Cys) + AMP + diphosphate. In Exiguobacterium sp. (strain ATCC BAA-1283 / AT1b), this protein is Cysteine--tRNA ligase.